The chain runs to 233 residues: Favin (233 aa).

The Mn(2+) site is built by E120 and D122. D122, F124, N126, and D130 together coordinate Ca(2+). 2 residues coordinate Mn(2+): D130 and H137. The N-linked (GlcNAc...) asparagine glycan is linked to N168.

This sequence belongs to the leguminous lectin family. Heterodimer of an alpha and a beta chain.

In Vicia faba (Broad bean), this protein is Favin.